A 431-amino-acid polypeptide reads, in one-letter code: Glucose-1-phosphate adenylyltransferase (431 aa).

Residues glycine 163, 178 to 179 (EK), and serine 210 contribute to the alpha-D-glucose 1-phosphate site.

This sequence belongs to the bacterial/plant glucose-1-phosphate adenylyltransferase family. As to quaternary structure, homotetramer.

The enzyme catalyses alpha-D-glucose 1-phosphate + ATP + H(+) = ADP-alpha-D-glucose + diphosphate. The protein operates within glycan biosynthesis; glycogen biosynthesis. Involved in the biosynthesis of ADP-glucose, a building block required for the elongation reactions to produce glycogen. Catalyzes the reaction between ATP and alpha-D-glucose 1-phosphate (G1P) to produce pyrophosphate and ADP-Glc. The chain is Glucose-1-phosphate adenylyltransferase from Synechococcus sp. (strain WH7803).